The following is a 547-amino-acid chain: DNA polymerase kappa (547 aa).

Residues leucine 18–alanine 39 are disordered. The span at isoleucine 20–glutamate 31 shows a compositional bias: acidic residues. The 185-residue stretch at isoleucine 132–glycine 316 folds into the UmuC domain. Residues aspartate 136 and aspartate 226 each coordinate Mg(2+). A UBZ4-type zinc finger spans residues threonine 489 to threonine 518. Positions 492, 495, 509, and 513 each coordinate Zn(2+).

Interacts with hus1 and rad17.

The protein resides in the cytoplasm. It is found in the nucleus. The enzyme catalyses DNA(n) + a 2'-deoxyribonucleoside 5'-triphosphate = DNA(n+1) + diphosphate. In terms of biological role, DNA polymerase specifically involved in DNA repair. Plays an important role in translesion synthesis, where the normal high-fidelity DNA polymerases cannot proceed and DNA synthesis stalls. Has a role in meiosis. The chain is DNA polymerase kappa (mug40) from Schizosaccharomyces pombe (strain 972 / ATCC 24843) (Fission yeast).